Reading from the N-terminus, the 230-residue chain is UPF0173 metal-dependent hydrolase Sca_1312 (230 aa).

The protein belongs to the UPF0173 family.

The protein is UPF0173 metal-dependent hydrolase Sca_1312 of Staphylococcus carnosus (strain TM300).